We begin with the raw amino-acid sequence, 336 residues long: Ferredoxin--NADP reductase (336 aa).

FAD-binding residues include threonine 18, glutamate 37, glutamine 45, tyrosine 50, valine 92, phenylalanine 127, aspartate 290, and serine 331.

The protein belongs to the ferredoxin--NADP reductase type 2 family. Homodimer. Requires FAD as cofactor.

It carries out the reaction 2 reduced [2Fe-2S]-[ferredoxin] + NADP(+) + H(+) = 2 oxidized [2Fe-2S]-[ferredoxin] + NADPH. The protein is Ferredoxin--NADP reductase of Symbiobacterium thermophilum (strain DSM 24528 / JCM 14929 / IAM 14863 / T).